The sequence spans 156 residues: Small ribosomal subunit protein uS7 (156 aa).

This sequence belongs to the universal ribosomal protein uS7 family. As to quaternary structure, part of the 30S ribosomal subunit. Contacts proteins S9 and S11.

Functionally, one of the primary rRNA binding proteins, it binds directly to 16S rRNA where it nucleates assembly of the head domain of the 30S subunit. Is located at the subunit interface close to the decoding center, probably blocks exit of the E-site tRNA. In Ligilactobacillus salivarius (strain UCC118) (Lactobacillus salivarius), this protein is Small ribosomal subunit protein uS7.